Consider the following 670-residue polypeptide: Probable leucine-rich repeat receptor-like protein kinase At1g68400 (670 aa).

Positions 1-29 (MAKSSFFNKHLLLSLLILLQSCLLSSSSS) are cleaved as a signal peptide. The Extracellular portion of the chain corresponds to 30 to 274 (TDSETLLNFK…KSNNTSRIST (245 aa)). Asn52, Asn79, Asn102, Asn109, and Asn112 each carry an N-linked (GlcNAc...) asparagine glycan. LRR repeat units follow at residues 69–91 (RVTR…TSLT), 92–114 (SLRV…SNLT), 115–137 (ALKL…ITSL), 139–162 (RLYR…TDLT), 163–185 (HLLT…NLSD), and 186–207 (LQDF…LSQF). Asn149, Asn182, and Asn190 each carry an N-linked (GlcNAc...) asparagine glycan. Residues 230–266 (SSDPTKPGRPDEAKASPLNKPETVPSSPTSIHGGDKS) are disordered. Over residues 253–266 (VPSSPTSIHGGDKS) the composition is skewed to polar residues. N-linked (GlcNAc...) asparagine glycosylation occurs at Asn268. A helical membrane pass occupies residues 275-295 (ISLIAIILGDFIILSFVSLLL). Residues 296–670 (YYCFWRQYAV…EDTCGGTTSQ (375 aa)) are Cytoplasmic-facing. Residues 362–636 (RASAEMLGKG…GHVVKLIEDI (275 aa)) form the Protein kinase domain. Phosphoserine is present on Ser364. ATP-binding positions include 368–376 (LGKGGFGTA) and Lys390. Residue Ser443 is modified to Phosphoserine. Thr463 is modified (phosphothreonine). The Proton acceptor role is filled by Asp491. Residue Thr616 is modified to Phosphothreonine.

This sequence belongs to the protein kinase superfamily. Ser/Thr protein kinase family.

The protein localises to the cell membrane. It catalyses the reaction L-seryl-[protein] + ATP = O-phospho-L-seryl-[protein] + ADP + H(+). The enzyme catalyses L-threonyl-[protein] + ATP = O-phospho-L-threonyl-[protein] + ADP + H(+). In Arabidopsis thaliana (Mouse-ear cress), this protein is Probable leucine-rich repeat receptor-like protein kinase At1g68400.